Here is a 522-residue protein sequence, read N- to C-terminus: MDFLLLGLCLYWLLRRPSGVVLCLLGACFQMLPAAPSGCPQLCRCEGRLLYCEALNLTEAPHNLSGLLGLSLRYNSLSELRAGQFTGLMQLTWLYLDHNHICSVQGDAFQKLRRVKELTLSSNQITQLPNTTFRPMPNLRSVDLSYNKLQALAPDLFHGLRKLTTLHMRANAIQFVPVRIFQDCRSLKFLDIGYNQLKSLARNSFAGLFKLTELHLEHNDLVKVNFAHFPRLISLHSLCLRRNKVAIVVSSLDWVWNLEKMDLSGNEIEYMEPHVFETVPHLQSLQLDSNRLTYIEPRILNSWKSLTSITLAGNLWDCGRNVCALASWLNNFQGRYDGNLQCASPEYAQGEDVLDAVYAFHLCEDGAEPTSGHLLSAVTNRSDLGPPASSATTLADGGEGQHDGTFEPATVALPGGEHAENAVQIHKVVTGTMALIFSFLIVVLVLYVSWKCFPASLRQLRQCFVTQRRKQKQKQTMHQMAAMSAQEYYVDYKPNHIEGALVIINEYGSCTCHQQPARECEV.

A signal peptide spans 1 to 34; sequence MDFLLLGLCLYWLLRRPSGVVLCLLGACFQMLPA. Residues 35 to 63 enclose the LRRNT domain; it reads APSGCPQLCRCEGRLLYCEALNLTEAPHN. Residues 35–427 lie on the Extracellular side of the membrane; sequence APSGCPQLCR…HAENAVQIHK (393 aa). N-linked (GlcNAc...) asparagine glycans are attached at residues asparagine 56 and asparagine 63. LRR repeat units lie at residues 64 to 87, 89 to 111, 112 to 135, 137 to 159, 161 to 183, 184 to 207, 209 to 231, 233 to 255, 256 to 278, and 279 to 302; these read LSGLLGLSLRYNSLSELRAGQFTG, MQLTWLYLDHNHICSVQGDAFQK, LRRVKELTLSSNQITQLPNTTFRP, PNLRSVDLSYNKLQALAPDLFHG, RKLTTLHMRANAIQFVPVRIFQD, CRSLKFLDIGYNQLKSLARNSFAG, FKLTELHLEHNDLVKVNFAHFPR, ISLHSLCLRRNKVAIVVSSLDWV, WNLEKMDLSGNEIEYMEPHVFET, and VPHLQSLQLDSNRLTYIEPRILNS. Asparagine 130 is a glycosylation site (N-linked (GlcNAc...) asparagine). The region spanning 314-365 is the LRRCT domain; it reads NLWDCGRNVCALASWLNNFQGRYDGNLQCASPEYAQGEDVLDAVYAFHLCED. A glycan (N-linked (GlcNAc...) asparagine) is linked at asparagine 380. The disordered stretch occupies residues 382–401; sequence SDLGPPASSATTLADGGEGQ. Residues 428-448 traverse the membrane as a helical segment; sequence VVTGTMALIFSFLIVVLVLYV. Over 449–522 the chain is Cytoplasmic; it reads SWKCFPASLR…HQQPARECEV (74 aa).

It belongs to the LRRTM family. Predominantly expressed in forebrain regions including thalamus and cerebral cortex.

It is found in the cell membrane. The protein resides in the postsynaptic cell membrane. In terms of biological role, exhibits strong synaptogenic activity, restricted to excitatory presynaptic differentiation, acting at both pre- and postsynaptic level. In Homo sapiens (Human), this protein is Leucine-rich repeat transmembrane neuronal protein 1 (LRRTM1).